The primary structure comprises 138 residues: Acidic phospholipase A2 Cvv-E6b (138 aa).

An N-terminal signal peptide occupies residues 1-16 (MRTLWILAVLLLGVEG). Intrachain disulfides connect Cys42-Cys131, Cys44-Cys60, Cys59-Cys111, Cys65-Cys138, Cys66-Cys104, Cys73-Cys97, and Cys91-Cys102. Ca(2+) is bound by residues Tyr43, Gly45, and Gly47. His63 is a catalytic residue. Asp64 provides a ligand contact to Ca(2+). Residue Asp105 is part of the active site.

Ca(2+) is required as a cofactor. Expressed by the venom gland.

Its subcellular location is the secreted. The catalysed reaction is a 1,2-diacyl-sn-glycero-3-phosphocholine + H2O = a 1-acyl-sn-glycero-3-phosphocholine + a fatty acid + H(+). Its function is as follows. Snake venom phospholipase A2 (PLA2) that shows very low inhibition of ADP-induced platelet aggregation in platelet-rich plasma of human, rabbit and guinea pig. PLA2 catalyzes the calcium-dependent hydrolysis of the 2-acyl groups in 3-sn-phosphoglycerides. The chain is Acidic phospholipase A2 Cvv-E6b from Crotalus viridis viridis (Prairie rattlesnake).